Consider the following 336-residue polypeptide: Fimbrial adhesin PapGII (336 aa).

The signal sequence occupies residues 1-20; that stretch reads MKKWFPALLFSLCVSGESSA. Intrachain disulfides connect Cys64–Cys138 and Cys217–Cys249. D-galactose is bound by residues Glu79 and 124 to 127; that span reads GYKW.

Belongs to the adhesin PapG family.

The protein localises to the secreted. Its subcellular location is the fimbrium. Its function is as follows. Tip adhesin component of type P pili that plays a critical role in kidney infection through targeted interaction with the globoseries glycolipids containing the Gal-alpha(1-4)-Gal disaccharide present on uroepithelial cells. In turn, transcriptionally regulates host gene expression in kidney cells, leading to inflammatory pathway activation and renal tissue damage. Acts thereby as key determinant of invasive uropathogenic E.coli (UPEC), which cause pyelonephritis and urinary-source bacteremia. This chain is Fimbrial adhesin PapGII, found in Escherichia coli.